Here is a 202-residue protein sequence, read N- to C-terminus: MDKFVKLTGVAAPLPVVNIDTDMIIPKDYLKTIKRTGLGKGLFAEARYNEDGSENPDFVLNKPAYRDAKILVAGDNFGCGSSREHAPWALLDFGIRCVISTSFADIFYNNCFKNGILPIKVSQEDLDKLMDDASRGSNAILTVDLENLEITGPDGGSIKFDLDAFKRHCLLNGLDDIGLTMEKGKAIDEFEKKNAASHPWAA.

Belongs to the LeuD family. LeuD type 1 subfamily. Heterodimer of LeuC and LeuD.

It carries out the reaction (2R,3S)-3-isopropylmalate = (2S)-2-isopropylmalate. It participates in amino-acid biosynthesis; L-leucine biosynthesis; L-leucine from 3-methyl-2-oxobutanoate: step 2/4. In terms of biological role, catalyzes the isomerization between 2-isopropylmalate and 3-isopropylmalate, via the formation of 2-isopropylmaleate. The polypeptide is 3-isopropylmalate dehydratase small subunit (Rhizobium etli (strain CIAT 652)).